Reading from the N-terminus, the 241-residue chain is Uridylate kinase (241 aa).

14–17 (KLSG) lines the ATP pocket. G56 is a UMP binding site. Residues G57 and R61 each contribute to the ATP site. UMP contacts are provided by residues D77 and 138-145 (TGNPFFTT). T165, Y171, and D174 together coordinate ATP.

Belongs to the UMP kinase family. In terms of assembly, homohexamer.

The protein resides in the cytoplasm. It carries out the reaction UMP + ATP = UDP + ADP. It participates in pyrimidine metabolism; CTP biosynthesis via de novo pathway; UDP from UMP (UMPK route): step 1/1. Inhibited by UTP. In terms of biological role, catalyzes the reversible phosphorylation of UMP to UDP. This Psychrobacter arcticus (strain DSM 17307 / VKM B-2377 / 273-4) protein is Uridylate kinase.